The chain runs to 62 residues: UPF0337 protein mll8179 (62 aa).

A disordered region spans residues 1-42; sequence MRNMVNKDQVAGLAKQLKGSVKQAAGKATGNRRTQAEGMADK.

Belongs to the UPF0337 (CsbD) family.

The chain is UPF0337 protein mll8179 from Mesorhizobium japonicum (strain LMG 29417 / CECT 9101 / MAFF 303099) (Mesorhizobium loti (strain MAFF 303099)).